We begin with the raw amino-acid sequence, 286 residues long: MTEVITSIQDMQRLAHDFKHDGKSIGFVPTMGALHDGHLTMMRRSVKENDVSVASVFVNPLQFAPGEDYDAYPRDIEKDTKAAESAGIDYVFHPSVEAMYPDEIGVALKVGKLAEVLEGAQRPIHFNGVVTVVNKLFNIVQPDRAYFGKKDAQQLAIVEKMVQDFNHPIEIVGQDIVREDDGLAKSSRNVYLTEQERQEAPALQKSLQLAEKLYREGERESKIIVEAVTAYLESHTSGHVDEVAVYSYPELVEQHHIEGRIFISLAVKFSKARLIDNLIIGDEEID.

ATP is bound at residue 31-38; sequence MGALHDGH. Catalysis depends on histidine 38, which acts as the Proton donor. Glutamine 62 is a binding site for (R)-pantoate. Glutamine 62 contributes to the beta-alanine binding site. 148–151 contacts ATP; the sequence is GKKD. Glutamine 154 contacts (R)-pantoate. ATP-binding positions include valine 177 and 185-188; that span reads KSSR.

The protein belongs to the pantothenate synthetase family. As to quaternary structure, homodimer.

It localises to the cytoplasm. The catalysed reaction is (R)-pantoate + beta-alanine + ATP = (R)-pantothenate + AMP + diphosphate + H(+). It functions in the pathway cofactor biosynthesis; (R)-pantothenate biosynthesis; (R)-pantothenate from (R)-pantoate and beta-alanine: step 1/1. Its function is as follows. Catalyzes the condensation of pantoate with beta-alanine in an ATP-dependent reaction via a pantoyl-adenylate intermediate. The sequence is that of Pantothenate synthetase from Staphylococcus carnosus (strain TM300).